Consider the following 518-residue polypeptide: Putative succinate-semialdehyde dehydrogenase [NADP(+)] 2 (518 aa).

NADP(+)-binding positions include 157-158 (WN), 181-184 (KPDS), and 232-233 (GS). Catalysis depends on E254, which acts as the Proton acceptor. L255 contacts NADP(+). The active-site Nucleophile is the C288. E386 serves as a coordination point for NADP(+).

This sequence belongs to the aldehyde dehydrogenase family.

The catalysed reaction is succinate semialdehyde + NADP(+) + H2O = succinate + NADPH + 2 H(+). In terms of biological role, catalyzes the NADP(+)-dependent oxidation of succinate semialdehyde to succinate. Although it has succinate semialdehyde dehydrogenase activity, is likely to act physiologically on a different aldehyde(s). This is Putative succinate-semialdehyde dehydrogenase [NADP(+)] 2 (gabD2) from Mycobacterium bovis (strain ATCC BAA-935 / AF2122/97).